The sequence spans 190 residues: Large ribosomal subunit protein uL6 (190 aa).

It belongs to the universal ribosomal protein uL6 family.

This Drosophila melanogaster (Fruit fly) protein is Large ribosomal subunit protein uL6 (RpL9).